We begin with the raw amino-acid sequence, 182 residues long: Bifunctional protein PyrR (182 aa).

The PRPP-binding motif lies at 99 to 111; sequence VILVDDVLYTGRT.

Belongs to the purine/pyrimidine phosphoribosyltransferase family. PyrR subfamily. Homodimer and homohexamer; in equilibrium.

The catalysed reaction is UMP + diphosphate = 5-phospho-alpha-D-ribose 1-diphosphate + uracil. Functionally, regulates transcriptional attenuation of the pyrimidine nucleotide (pyr) operon by binding in a uridine-dependent manner to specific sites on pyr mRNA. This disrupts an antiterminator hairpin in the RNA and favors formation of a downstream transcription terminator, leading to a reduced expression of downstream genes. In terms of biological role, also displays a weak uracil phosphoribosyltransferase activity which is not physiologically significant. The polypeptide is Bifunctional protein PyrR (Alkaliphilus metalliredigens (strain QYMF)).